Consider the following 349-residue polypeptide: Cytokine response-modifying protein B (349 aa).

The signal sequence occupies residues 1–22 (MKSVLYLYILFLSCIIINGRDA). The TNF-binding stretch occupies residues 1–160 (MKSVLYLYIL…SPCGFGTYSH (160 aa)). TNFR-Cys repeat units follow at residues 31-66 (KCKDTEYKRHNLCCLSCPPGTYASRLCDSKTNTQCT) and 67-108 (PCGS…NRIC). 6 cysteine pairs are disulfide-bonded: Cys32/Cys43, Cys44/Cys57, Cys47/Cys65, Cys68/Cys83, Cys86/Cys100, and Cys90/Cys108. N-linked (GlcNAc...) asparagine; by host glycans are attached at residues Asn101, Asn173, Asn189, Asn215, and Asn248. Residues 161–349 (TVSSADKCEP…ITNSKPTRFL (189 aa)) are chemokine-binding.

It belongs to the orthopoxvirus OPG002 family. As to quaternary structure, homodimer. Interacts with host TNF, LTA, CCL28, CCL25, CXCL12, CXCL13 and CXCl14.

The protein resides in the secreted. Inhibits host immune defense by binding to host TNF and various chemokines in the extracellular space. Binds host CC chemokines (beta chemokines) and CXC chemokines (alpha chemokines). The sequence is that of Cytokine response-modifying protein B (OPG002) from Variola virus (isolate Human/India/Ind3/1967) (VARV).